The following is a 245-amino-acid chain: tRNA pseudouridine synthase A (245 aa).

The active-site Nucleophile is Asp52. Substrate is bound at residue Tyr110.

It belongs to the tRNA pseudouridine synthase TruA family. As to quaternary structure, homodimer.

The catalysed reaction is uridine(38/39/40) in tRNA = pseudouridine(38/39/40) in tRNA. Its function is as follows. Formation of pseudouridine at positions 38, 39 and 40 in the anticodon stem and loop of transfer RNAs. The protein is tRNA pseudouridine synthase A of Borrelia duttonii (strain Ly).